We begin with the raw amino-acid sequence, 731 residues long: Golgin subfamily A member 5 (731 aa).

Position 2 is an N-acetylserine (Ser2). The Cytoplasmic segment spans residues 2-698; it reads SWFVDLAGKA…IFLRRYPIAR (697 aa). Arg89 carries the dimethylated arginine modification. Residues 93–222 are disordered; sequence EASHPVENAS…PTPNDDGKSH (130 aa). Residue Ser116 is modified to Phosphoserine. A compositionally biased stretch (basic and acidic residues) spans 134–146; it reads PTGRVEIRKEKGK. A compositionally biased stretch (low complexity) spans 147–167; sequence TPVFQSSQTSSVSSVNPSVTT. Residues 173–188 are compositionally biased toward polar residues; that stretch reads ENSFGSQTHEAASNSD. Over residues 189 to 199 the composition is skewed to basic and acidic residues; sequence SSHEGQEESSK. Positions 216 to 632 form a coiled coil; it reads NDDGKSHELS…EQQMNSASGS (417 aa). The helical; Anchor for type IV membrane protein transmembrane segment at 699 to 719 threads the bilayer; that stretch reads VFVIIYMALLHLWVMIVLLTY. The Lumenal portion of the chain corresponds to 720–731; that stretch reads TPEMHHDQPYGK.

Homodimer. Interacts with RAB1A that has been activated by GTP-binding, and possibly also with OCRL1. Interacts with isoform CASP of CUX1. In terms of processing, highly phosphorylated during mitosis. Phosphorylation is barely detectable during interphase. As to expression, ubiquitous. Highly expressed in seminiferous tubules and Leydig cells in testis, and detected at much lower levels in the other tissues tested. Expression is very low or not detectable in spermatozoa.

It localises to the golgi apparatus membrane. Its function is as follows. Involved in maintaining Golgi structure. Stimulates the formation of Golgi stacks and ribbons. Involved in intra-Golgi retrograde transport. This Homo sapiens (Human) protein is Golgin subfamily A member 5 (GOLGA5).